A 425-amino-acid polypeptide reads, in one-letter code: Serine--tRNA ligase (425 aa).

An L-serine-binding site is contributed by 230-232 (TSE). 261 to 263 (RKE) provides a ligand contact to ATP. E284 contacts L-serine. 348–351 (EISS) is a binding site for ATP. Residue S385 participates in L-serine binding.

Belongs to the class-II aminoacyl-tRNA synthetase family. Type-1 seryl-tRNA synthetase subfamily. In terms of assembly, homodimer. The tRNA molecule binds across the dimer.

It localises to the cytoplasm. It carries out the reaction tRNA(Ser) + L-serine + ATP = L-seryl-tRNA(Ser) + AMP + diphosphate + H(+). The enzyme catalyses tRNA(Sec) + L-serine + ATP = L-seryl-tRNA(Sec) + AMP + diphosphate + H(+). Its pathway is aminoacyl-tRNA biosynthesis; selenocysteinyl-tRNA(Sec) biosynthesis; L-seryl-tRNA(Sec) from L-serine and tRNA(Sec): step 1/1. Functionally, catalyzes the attachment of serine to tRNA(Ser). Is also able to aminoacylate tRNA(Sec) with serine, to form the misacylated tRNA L-seryl-tRNA(Sec), which will be further converted into selenocysteinyl-tRNA(Sec). This is Serine--tRNA ligase from Wolbachia pipientis wMel.